The primary structure comprises 330 residues: Complement factor H-related protein 1 (330 aa).

The signal sequence occupies residues 1-18 (MWLLVSVILISRISSVGG). Sushi domains are found at residues 22–84 (FCDF…PKCL), 85–142 (RLCF…KCRS), 145–203 (TSCV…QCKD), 206–264 (GKCG…KCLH), and 273–329 (MENY…TCAK). Disulfide bonds link cysteine 23-cysteine 72, cysteine 55-cysteine 83, cysteine 87-cysteine 129, cysteine 114-cysteine 140, cysteine 147-cysteine 190, cysteine 176-cysteine 201, cysteine 208-cysteine 251, cysteine 237-cysteine 262, cysteine 266-cysteine 317, and cysteine 300-cysteine 327. Asparagine 126 carries an N-linked (GlcNAc...) asparagine glycan. Residue asparagine 194 is glycosylated (N-linked (GlcNAc...) asparagine).

In terms of assembly, head-to-tail homodimer and heterodimer with CFHR2 or CFHR5. As to quaternary structure, (Microbial infection) Interacts with C.albicans GPD2; the interaction is direct and leads to the degradation of C3. Post-translationally, N-glycosylated. Two forms are observed; one with a single side chain and the other with two. As to expression, expressed by the liver and secreted in plasma.

The protein resides in the secreted. In terms of biological role, involved in complement regulation. The dimerized forms have avidity for tissue-bound complement fragments and efficiently compete with the physiological complement inhibitor CFH. Can associate with lipoproteins and may play a role in lipid metabolism. This chain is Complement factor H-related protein 1 (CFHR1), found in Homo sapiens (Human).